The primary structure comprises 225 residues: Urease accessory protein UreF (225 aa).

It belongs to the UreF family. In terms of assembly, ureD, UreF and UreG form a complex that acts as a GTP-hydrolysis-dependent molecular chaperone, activating the urease apoprotein by helping to assemble the nickel containing metallocenter of UreC. The UreE protein probably delivers the nickel.

It is found in the cytoplasm. Required for maturation of urease via the functional incorporation of the urease nickel metallocenter. This is Urease accessory protein UreF from Picosynechococcus sp. (strain ATCC 27264 / PCC 7002 / PR-6) (Agmenellum quadruplicatum).